Reading from the N-terminus, the 434-residue chain is MGPSVAPHAVHTIANPGVSAAGLVAADHAVAAAIADEETRQRDSIELIASENFVSRAVLDAQGSVLTNKYAEGYPHRRYYGGCANVDAIEDLVIARVNQLFGSAYANVQPHSGSQANQAVFLALLAPGDTILGLDLKAGGHLTHGAPVNMSGRWFKAVSYGVDPETHRIDMDQVAVQARQHRPRLLIAGGSAYPRIIDFGRFRQIADEVGAILMVDMAHFAGLVAGGVYPSPVPFADVVTSTTHKTLRGPRGGFVLTNDANIAKKINSATFPGLQGGPLMHVIAAKAVAFGEALQPEFGAYAQAVVENCRVLAQALADGGLTITSGGTDCHLAVVDLRPFGVTGNIAEQALESVGITLNKNAIPNDPEKPMVTSGIRVGTAAGTSRGFGADQYREIAGLVLETLHAVRAGTLDAAGQEINKSVRRLAASFPLPY.

Residues L136 and 140 to 142 each bind (6S)-5,6,7,8-tetrahydrofolate; that span reads GHL. Residue K245 is modified to N6-(pyridoxal phosphate)lysine.

This sequence belongs to the SHMT family. Homodimer. The cofactor is pyridoxal 5'-phosphate.

It localises to the cytoplasm. The enzyme catalyses (6R)-5,10-methylene-5,6,7,8-tetrahydrofolate + glycine + H2O = (6S)-5,6,7,8-tetrahydrofolate + L-serine. It participates in one-carbon metabolism; tetrahydrofolate interconversion. The protein operates within amino-acid biosynthesis; glycine biosynthesis; glycine from L-serine: step 1/1. Functionally, catalyzes the reversible interconversion of serine and glycine with tetrahydrofolate (THF) serving as the one-carbon carrier. This reaction serves as the major source of one-carbon groups required for the biosynthesis of purines, thymidylate, methionine, and other important biomolecules. Also exhibits THF-independent aldolase activity toward beta-hydroxyamino acids, producing glycine and aldehydes, via a retro-aldol mechanism. The chain is Serine hydroxymethyltransferase 2 from Rhodopseudomonas palustris (strain ATCC BAA-98 / CGA009).